We begin with the raw amino-acid sequence, 297 residues long: N-acetylmannosamine kinase (297 aa).

Residues 5–12 (ALDIGGTK) and 132–139 (GVGGGIIL) contribute to the ATP site. Positions 156, 166, 168, and 173 each coordinate Zn(2+).

Belongs to the ROK (NagC/XylR) family. NanK subfamily. Homodimer.

The catalysed reaction is an N-acyl-D-mannosamine + ATP = an N-acyl-D-mannosamine 6-phosphate + ADP + H(+). The protein operates within amino-sugar metabolism; N-acetylneuraminate degradation; D-fructose 6-phosphate from N-acetylneuraminate: step 2/5. Functionally, catalyzes the phosphorylation of N-acetylmannosamine (ManNAc) to ManNAc-6-P. The sequence is that of N-acetylmannosamine kinase from Pasteurella multocida (strain Pm70).